A 412-amino-acid chain; its full sequence is Poly-beta-1,6-N-acetyl-D-glucosamine synthase (412 aa).

A run of 4 helical transmembrane segments spans residues 7-28 (LLFYPIFMSIYWIVGSIYYFFI), 298-320 (IASITWVYIVICYLSFLVITANI), 332-354 (IFFFSSFTMTFINIIQFTVALFI), and 364-386 (VGLIFLSWYPTLYWVINAAVVIM).

Belongs to the glycosyltransferase 2 family.

Its subcellular location is the cell membrane. Its function is as follows. N-acetylglucosaminyltransferase that catalyzes the polymerization of single monomer units of UDP-N-acetylglucosamine to produce the linear homomer poly-beta-1,6-N-acetyl-D-glucosamine (PNAG, also referred to as PIA), a biofilm adhesin polysaccharide. Requires IcaD for full activity. In Staphylococcus epidermidis, this protein is Poly-beta-1,6-N-acetyl-D-glucosamine synthase (icaA).